The following is a 302-amino-acid chain: 5'-3' exonuclease (302 aa).

The 97-residue stretch at 173–269 folds into the 5'-3' exonuclease domain; that stretch reads IPKLIPDLLG…NITTKKIKML (97 aa).

5'-3' exonuclease acting preferentially on double-stranded DNA. The chain is 5'-3' exonuclease (pol) from Buchnera aphidicola subsp. Baizongia pistaciae (strain Bp).